An 876-amino-acid chain; its full sequence is Alanine--tRNA ligase (876 aa).

Zn(2+)-binding residues include His-565, His-569, Cys-667, and His-671.

The protein belongs to the class-II aminoacyl-tRNA synthetase family. Zn(2+) is required as a cofactor.

It is found in the cytoplasm. It catalyses the reaction tRNA(Ala) + L-alanine + ATP = L-alanyl-tRNA(Ala) + AMP + diphosphate. Catalyzes the attachment of alanine to tRNA(Ala) in a two-step reaction: alanine is first activated by ATP to form Ala-AMP and then transferred to the acceptor end of tRNA(Ala). Also edits incorrectly charged Ser-tRNA(Ala) and Gly-tRNA(Ala) via its editing domain. This Staphylococcus aureus (strain Mu3 / ATCC 700698) protein is Alanine--tRNA ligase.